Here is a 307-residue protein sequence, read N- to C-terminus: Deaminated glutathione amidase, chloroplastic/cytosolic (307 aa).

A chloroplast-targeting transit peptide spans 1 to 36 (MNAYSVSLDFTKPSLFTRITLSSQIPLTMATTVNKT). One can recognise a CN hydrolase domain in the interval 37-286 (VRVAAAQMTS…TGIVVADIDF (250 aa)). E76 serves as the catalytic Proton acceptor. Residue K147 is the Proton donor of the active site. C188 serves as the catalytic Nucleophile.

Belongs to the nitrilase superfamily. NIT1/NIT2 family.

The protein localises to the plastid. It is found in the chloroplast. The protein resides in the cytoplasm. It catalyses the reaction N-(4-oxoglutaryl)-L-cysteinylglycine + H2O = L-cysteinylglycine + 2-oxoglutarate. The catalysed reaction is N-(4-carboxy-4-oxobutanoyl)-L-ethylglycylglycine + H2O = N-(2-aminobutanoyl)glycine + 2-oxoglutarate. Functionally, catalyzes the hydrolysis of the amide bond in N-(4-oxoglutarate)-L-cysteinylglycine (deaminated glutathione), a metabolite repair reaction to dispose of the harmful deaminated glutathione. Possesses amidase activity toward deaminated ophthalmate in vitro. The sequence is that of Deaminated glutathione amidase, chloroplastic/cytosolic from Arabidopsis thaliana (Mouse-ear cress).